Reading from the N-terminus, the 71-residue chain is Putative membrane protein insertion efficiency factor (71 aa).

The protein belongs to the UPF0161 family.

The protein resides in the cell membrane. Functionally, could be involved in insertion of integral membrane proteins into the membrane. In Acetivibrio thermocellus (strain ATCC 27405 / DSM 1237 / JCM 9322 / NBRC 103400 / NCIMB 10682 / NRRL B-4536 / VPI 7372) (Clostridium thermocellum), this protein is Putative membrane protein insertion efficiency factor.